The following is an 89-amino-acid chain: Small ribosomal subunit protein uS15 (89 aa).

It belongs to the universal ribosomal protein uS15 family. As to quaternary structure, part of the 30S ribosomal subunit. Forms a bridge to the 50S subunit in the 70S ribosome, contacting the 23S rRNA.

Its function is as follows. One of the primary rRNA binding proteins, it binds directly to 16S rRNA where it helps nucleate assembly of the platform of the 30S subunit by binding and bridging several RNA helices of the 16S rRNA. Functionally, forms an intersubunit bridge (bridge B4) with the 23S rRNA of the 50S subunit in the ribosome. The protein is Small ribosomal subunit protein uS15 of Mycobacterium marinum (strain ATCC BAA-535 / M).